A 138-amino-acid polypeptide reads, in one-letter code: UPF0201 protein PH1010 (138 aa).

This sequence belongs to the UPF0201 family.

The protein is UPF0201 protein PH1010 of Pyrococcus horikoshii (strain ATCC 700860 / DSM 12428 / JCM 9974 / NBRC 100139 / OT-3).